We begin with the raw amino-acid sequence, 348 residues long: Dihydroorotase (348 aa).

Residues His13 and His15 each coordinate Zn(2+). Substrate contacts are provided by residues 15–17 (HLR) and Asn41. Lys99, His136, and His174 together coordinate Zn(2+). At Lys99 the chain carries N6-carboxylysine. His136 lines the substrate pocket. Leu219 is a substrate binding site. Asp247 is a Zn(2+) binding site. Asp247 is a catalytic residue. The substrate site is built by His251 and Ala263.

The protein belongs to the metallo-dependent hydrolases superfamily. DHOase family. Class II DHOase subfamily. Homodimer. Requires Zn(2+) as cofactor.

The enzyme catalyses (S)-dihydroorotate + H2O = N-carbamoyl-L-aspartate + H(+). It participates in pyrimidine metabolism; UMP biosynthesis via de novo pathway; (S)-dihydroorotate from bicarbonate: step 3/3. Catalyzes the reversible cyclization of carbamoyl aspartate to dihydroorotate. This is Dihydroorotase from Rhizobium johnstonii (strain DSM 114642 / LMG 32736 / 3841) (Rhizobium leguminosarum bv. viciae).